Reading from the N-terminus, the 448-residue chain is Ribulose bisphosphate carboxylase large chain (448 aa).

Positions 1-2 (MS) are excised as a propeptide. N-acetylproline is present on Pro3. Lys14 bears the N6,N6,N6-trimethyllysine mark. Residues Asn122 and Thr172 each contribute to the substrate site. The active-site Proton acceptor is the Lys174. Lys176 is a substrate binding site. The Mg(2+) site is built by Lys200, Asp202, and Glu203. Lys200 is modified (N6-carboxylysine). His293 serves as the catalytic Proton acceptor. Residues Arg294, His326, and Ser378 each coordinate substrate.

It belongs to the RuBisCO large chain family. Type I subfamily. In terms of assembly, heterohexadecamer of 8 large chains and 8 small chains; disulfide-linked. The disulfide link is formed within the large subunit homodimers. The cofactor is Mg(2+). Post-translationally, the disulfide bond which can form in the large chain dimeric partners within the hexadecamer appears to be associated with oxidative stress and protein turnover.

The protein localises to the plastid. It localises to the chloroplast. It catalyses the reaction 2 (2R)-3-phosphoglycerate + 2 H(+) = D-ribulose 1,5-bisphosphate + CO2 + H2O. It carries out the reaction D-ribulose 1,5-bisphosphate + O2 = 2-phosphoglycolate + (2R)-3-phosphoglycerate + 2 H(+). Functionally, ruBisCO catalyzes two reactions: the carboxylation of D-ribulose 1,5-bisphosphate, the primary event in carbon dioxide fixation, as well as the oxidative fragmentation of the pentose substrate in the photorespiration process. Both reactions occur simultaneously and in competition at the same active site. The chain is Ribulose bisphosphate carboxylase large chain from Dichapetalum crassifolium.